A 747-amino-acid polypeptide reads, in one-letter code: UPF0313 protein PA4928 (747 aa).

Residues 371 to 640 enclose the Radical SAM core domain; the sequence is AYEMIRFSVN…KSDQQRRLHK (270 aa). The [4Fe-4S] cluster site is built by Cys-385, Cys-389, and Cys-392. The tract at residues 670-747 is disordered; the sequence is GKHHLVPTYQ…KKSRQPNIPR (78 aa).

The protein belongs to the UPF0313 family. The cofactor is [4Fe-4S] cluster.

The sequence is that of UPF0313 protein PA4928 from Pseudomonas aeruginosa (strain ATCC 15692 / DSM 22644 / CIP 104116 / JCM 14847 / LMG 12228 / 1C / PRS 101 / PAO1).